Consider the following 315-residue polypeptide: L-lactate dehydrogenase (315 aa).

Residues Val-14, Asp-35, and Tyr-66 each contribute to the NAD(+) site. Substrate-binding positions include Gln-83, Arg-89, and 121–124; that span reads NPVD. NAD(+)-binding positions include 119-121 and Ser-144; that span reads VAN. Residue 149–152 coordinates substrate; sequence DTAR. Residue His-176 is the Proton acceptor of the active site. Tyr-221 carries the phosphotyrosine modification. Thr-230 serves as a coordination point for substrate.

Belongs to the LDH/MDH superfamily. LDH family. In terms of assembly, homotetramer.

Its subcellular location is the cytoplasm. The enzyme catalyses (S)-lactate + NAD(+) = pyruvate + NADH + H(+). The protein operates within fermentation; pyruvate fermentation to lactate; (S)-lactate from pyruvate: step 1/1. Functionally, catalyzes the conversion of lactate to pyruvate. The chain is L-lactate dehydrogenase from Mesomycoplasma hyopneumoniae (strain 7448) (Mycoplasma hyopneumoniae).